The primary structure comprises 163 residues: 2-C-methyl-D-erythritol 2,4-cyclodiphosphate synthase (163 aa).

D11 and H13 together coordinate a divalent metal cation. Residues D11 to H13 and H37 to S38 contribute to the 4-CDP-2-C-methyl-D-erythritol 2-phosphate site. Position 45 (H45) interacts with a divalent metal cation. 4-CDP-2-C-methyl-D-erythritol 2-phosphate-binding positions include D59 to G61, F64 to D68, A103 to A109, and R145.

The protein belongs to the IspF family. In terms of assembly, homotrimer. Requires a divalent metal cation as cofactor.

The enzyme catalyses 4-CDP-2-C-methyl-D-erythritol 2-phosphate = 2-C-methyl-D-erythritol 2,4-cyclic diphosphate + CMP. It functions in the pathway isoprenoid biosynthesis; isopentenyl diphosphate biosynthesis via DXP pathway; isopentenyl diphosphate from 1-deoxy-D-xylulose 5-phosphate: step 4/6. Its function is as follows. Involved in the biosynthesis of isopentenyl diphosphate (IPP) and dimethylallyl diphosphate (DMAPP), two major building blocks of isoprenoid compounds. Catalyzes the conversion of 4-diphosphocytidyl-2-C-methyl-D-erythritol 2-phosphate (CDP-ME2P) to 2-C-methyl-D-erythritol 2,4-cyclodiphosphate (ME-CPP) with a corresponding release of cytidine 5-monophosphate (CMP). This Nitrosomonas europaea (strain ATCC 19718 / CIP 103999 / KCTC 2705 / NBRC 14298) protein is 2-C-methyl-D-erythritol 2,4-cyclodiphosphate synthase.